The sequence spans 124 residues: Small ribosomal subunit protein uS12 (124 aa).

Asp89 carries the 3-methylthioaspartic acid modification.

Belongs to the universal ribosomal protein uS12 family. In terms of assembly, part of the 30S ribosomal subunit. Contacts proteins S8 and S17. May interact with IF1 in the 30S initiation complex.

Functionally, with S4 and S5 plays an important role in translational accuracy. Its function is as follows. Interacts with and stabilizes bases of the 16S rRNA that are involved in tRNA selection in the A site and with the mRNA backbone. Located at the interface of the 30S and 50S subunits, it traverses the body of the 30S subunit contacting proteins on the other side and probably holding the rRNA structure together. The combined cluster of proteins S8, S12 and S17 appears to hold together the shoulder and platform of the 30S subunit. The chain is Small ribosomal subunit protein uS12 from Aeromonas hydrophila subsp. hydrophila (strain ATCC 7966 / DSM 30187 / BCRC 13018 / CCUG 14551 / JCM 1027 / KCTC 2358 / NCIMB 9240 / NCTC 8049).